Consider the following 378-residue polypeptide: Merozoite surface protein P41 (378 aa).

A signal peptide spans 1–20; it reads MKGVIFCLVVLLWRQAWVSS. One can recognise a 6-Cys 1 domain in the interval 21 to 133; it reads KSHKCDFTKE…LKINRFLKDD (113 aa). 3 cysteine pairs are disulfide-bonded: C25/C42, C56/C113, and C64/C111. N-linked (GlcNAc...) asparagine glycosylation is found at N77, N149, N182, and N205. The 6-Cys 2 domain maps to 241 to 375; the sequence is VIKGCDFGNN…GESEVVLNSF (135 aa). 3 disulfide bridges follow: C245/C270, C284/C348, and C297/C346. Residue N351 is glycosylated (N-linked (GlcNAc...) asparagine).

Heterodimer; heterodimerizes with PF12. May form an antiparallel heterodimer with PF12. Processed into a soluble form.

It is found in the cell surface. The protein resides in the cell membrane. The sequence is that of Merozoite surface protein P41 (PF41) from Plasmodium falciparum (isolate 3D7).